A 139-amino-acid polypeptide reads, in one-letter code: ATP synthase epsilon chain (139 aa).

The protein belongs to the ATPase epsilon chain family. As to quaternary structure, F-type ATPases have 2 components, CF(1) - the catalytic core - and CF(0) - the membrane proton channel. CF(1) has five subunits: alpha(3), beta(3), gamma(1), delta(1), epsilon(1). CF(0) has three main subunits: a, b and c.

It is found in the cell inner membrane. Its function is as follows. Produces ATP from ADP in the presence of a proton gradient across the membrane. The sequence is that of ATP synthase epsilon chain from Pseudomonas syringae pv. tomato (strain ATCC BAA-871 / DC3000).